Reading from the N-terminus, the 134-residue chain is ATP synthase epsilon chain, chloroplastic (134 aa).

This sequence belongs to the ATPase epsilon chain family. In terms of assembly, F-type ATPases have 2 components, CF(1) - the catalytic core - and CF(0) - the membrane proton channel. CF(1) has five subunits: alpha(3), beta(3), gamma(1), delta(1), epsilon(1). CF(0) has three main subunits: a, b and c.

It localises to the plastid. The protein resides in the chloroplast thylakoid membrane. Functionally, produces ATP from ADP in the presence of a proton gradient across the membrane. This chain is ATP synthase epsilon chain, chloroplastic, found in Amborella trichopoda.